We begin with the raw amino-acid sequence, 51 residues long: U-Asilidin(1)-Mar1a (51 aa).

Positions 1–23 (MANYIEVFSVLAIIFATVLAALA) are cleaved as a signal peptide. Cystine bridges form between C26–C40, C33–C44, and C39–C49.

It belongs to the asilidin-1 family. In terms of tissue distribution, expressed by the venom gland. Is the most highly expressed peptide and is around 3000 times higher expressed in the thoracic glands compared to its body tissues.

The protein resides in the secreted. Functionally, induces neurotoxic effect on honeybees, including slow movements, disorientation and paralysis. Since it provokes similar symptoms than omega-atracotoxin, it is probable that it acts in the same way by inhibiting voltage-gated calcium channels. This is U-Asilidin(1)-Mar1a from Machimus arthriticus (Breck robberfly).